We begin with the raw amino-acid sequence, 344 residues long: Short chain dehydrogenase/reductase mfmJ (344 aa).

Residues leucine 51, lysine 76, aspartate 99, asparagine 126, tyrosine 213, and lysine 217 each contribute to the NADP(+) site. Tyrosine 213 serves as the catalytic Proton donor. The active-site Lowers pKa of active site Tyr is lysine 217.

It belongs to the short-chain dehydrogenases/reductases (SDR) family.

Functionally, short chain dehydrogenase/reductase; part of the gene cluster that mediates the biosynthesis of the phthalide-terpenoid hybrid 11'-O-desmethylfendlerol. MfmJ seems not to be involved directly in the biosynthesis of 11'-O-desmethylfendlerol and its role has still to be determined. The biosynthesis of 11'-O-desmethylfendlerol begins with the NR-PKS mfmB that forms 3,5-dimethylorsellinic acid (DMOA), which is then transformed into the phthalide 5,7-dihydroxy-4-(hydroxymethyl)-6-methylphthalide by the cytochrome P450 monooxygenase mfmA and the hydrolase mfmC. Subsequently, the methyltransferase mfmE catalyzes 7-O-methylation to yield 5-hydroxy-4-(hydroxymethyl)-7-methoxy-6-methylphthalide, which undergoes C-3 hydroxylation by the cytochrome P450 monooxygenase mfmF. The resultant cyclopolic acid (2,5-dihydroxy-4-(hydroxymethyl)-7-methoxy-6-methylphthalide) is then farnesylated by the DMATS-type prenyltransferase mfmD to afford 5-O-farnesylcyclopolic acid. Finally, the Pyr4-family terpene cyclase mfmH cyclizes the farnesyl moiety of 5-O-farnesylcyclopolic acid into a drimane-like structure, thus completing the biosynthesis of 11'-O-desmethylfendlerol. This is Short chain dehydrogenase/reductase mfmJ from Annulohypoxylon moriforme (Filamentous fungus).